The chain runs to 409 residues: CUB domain-containing protein (409 aa).

Residues 1–18 (MFLFSLTVLSALVLITES) form the signal peptide. Low complexity predominate over residues 154–229 (TEASTTAQET…TTAPTTAPAP (76 aa)). The interval 154–230 (TEASTTAQET…TAPTTAPAPI (77 aa)) is disordered. The cysteines at positions 232 and 257 are disulfide-linked. In terms of domain architecture, CUB spans 232 to 338 (CGGVLRGRGT…QEYVDYYYYD (107 aa)). The tract at residues 389-409 (VQGAADSESEASASSESSDED) is disordered. Positions 392-409 (AADSESEASASSESSDED) are enriched in low complexity.

In terms of tissue distribution, component of the acid-insoluble and acid-soluble organic matrix of the aragonitic skeleton (at protein level).

It is found in the secreted. In Acropora millepora (Staghorn coral), this protein is CUB domain-containing protein.